The chain runs to 305 residues: MGHALCVCSRGTVIIDNKRYLFIQKLGEGGFSYVDLVEGLHDGHFYALKRILCHEQQDREEAQREADMHRLFNHPNILRLVAYCLRERGAKHEAWLLLPFFKRGTLWNEIERLKDKGNFLTEDQILWLLLGICRGLEAIHAKGYAHRDLKPTNILLGDEGQPVLMDLGSMNQACIHVEGSRQALTLQDWAAQRCTISYRAPELFSVQSHCVIDERTDVWSLGCVLYAMMFGEGPYDMVFQKGDSVALAVQNQLSIPQSPRHSSALRQLLNSMMTVDPHQRPHIPLLLSQLEALQPPAPGQHTTQI.

G2 carries the N-myristoyl glycine lipid modification. 2 S-palmitoyl cysteine lipidation sites follow: C6 and C8. A Protein kinase domain is found at 20-293; sequence YLFIQKLGEG…PLLLSQLEAL (274 aa). ATP-binding positions include 26–34 and K49; that span reads LGEGGFSYV. Residue D148 is the Proton acceptor of the active site. Residues 166–202 form an activation loop region; sequence DLGSMNQACIHVEGSRQALTLQDWAAQRCTISYRAPE. Position 185 is a phosphothreonine; by autocatalysis (T185). S197 is modified (phosphoserine; by autocatalysis). Y198 carries the phosphotyrosine; by autocatalysis modification.

The protein belongs to the protein kinase superfamily. Ser/Thr protein kinase family. In terms of assembly, monomer. Interacts with DRG1 (via its N-terminal); the interaction phosphorylates DRG1. Post-translationally, mainly autophosphorylated on serine/threonine residues. Also autophosphorylated on Tyr-198. In terms of processing, it is uncertain whether palmitoylation is on Cys-6 and/or Cys-8. Ubiquitously expressed at very low levels.

Its subcellular location is the cytoplasm. It is found in the perinuclear region. The protein localises to the membrane. It carries out the reaction L-seryl-[protein] + ATP = O-phospho-L-seryl-[protein] + ADP + H(+). The enzyme catalyses L-threonyl-[protein] + ATP = O-phospho-L-threonyl-[protein] + ADP + H(+). The catalysed reaction is L-tyrosyl-[protein] + ATP = O-phospho-L-tyrosyl-[protein] + ADP + H(+). Functionally, membrane-associated protein kinase that phosphorylates on serine and threonine residues. In vitro substrates include DRG1, ENO1 and EIF4EBP1. Also autophosphorylates. May be involved in secretory vesicle trafficking or intracellular signaling. May have a role in regulating stromal-epithelial interactions that occur during ductal morphogenesis in the mammary gland. May be involved in TGF-beta signaling. Able to autophosphorylate on Tyr residue; it is however unclear whether it has tyrosine-protein kinase toward other proteins. In Homo sapiens (Human), this protein is Serine/threonine-protein kinase 16 (STK16).